The primary structure comprises 108 residues: UPF0145 protein gll1048 (108 aa).

This sequence belongs to the UPF0145 family.

This is UPF0145 protein gll1048 from Gloeobacter violaceus (strain ATCC 29082 / PCC 7421).